We begin with the raw amino-acid sequence, 167 residues long: Crossover junction endodeoxyribonuclease RuvC (167 aa).

Active-site residues include aspartate 7, glutamate 67, and aspartate 139. Mg(2+)-binding residues include aspartate 7, glutamate 67, and aspartate 139.

It belongs to the RuvC family. As to quaternary structure, homodimer which binds Holliday junction (HJ) DNA. The HJ becomes 2-fold symmetrical on binding to RuvC with unstacked arms; it has a different conformation from HJ DNA in complex with RuvA. In the full resolvosome a probable DNA-RuvA(4)-RuvB(12)-RuvC(2) complex forms which resolves the HJ. The cofactor is Mg(2+).

The protein localises to the cytoplasm. It carries out the reaction Endonucleolytic cleavage at a junction such as a reciprocal single-stranded crossover between two homologous DNA duplexes (Holliday junction).. Functionally, the RuvA-RuvB-RuvC complex processes Holliday junction (HJ) DNA during genetic recombination and DNA repair. Endonuclease that resolves HJ intermediates. Cleaves cruciform DNA by making single-stranded nicks across the HJ at symmetrical positions within the homologous arms, yielding a 5'-phosphate and a 3'-hydroxyl group; requires a central core of homology in the junction. The consensus cleavage sequence is 5'-(A/T)TT(C/G)-3'. Cleavage occurs on the 3'-side of the TT dinucleotide at the point of strand exchange. HJ branch migration catalyzed by RuvA-RuvB allows RuvC to scan DNA until it finds its consensus sequence, where it cleaves and resolves the cruciform DNA. This is Crossover junction endodeoxyribonuclease RuvC from Akkermansia muciniphila (strain ATCC BAA-835 / DSM 22959 / JCM 33894 / BCRC 81048 / CCUG 64013 / CIP 107961 / Muc).